Consider the following 544-residue polypeptide: Chaperonin GroEL (544 aa).

ATP-binding positions include 29–32 (TLGP), K50, 86–90 (DGTTT), G413, 479–481 (DAA), and D495.

It belongs to the chaperonin (HSP60) family. As to quaternary structure, forms a cylinder of 14 subunits composed of two heptameric rings stacked back-to-back. Interacts with the co-chaperonin GroES.

Its subcellular location is the cytoplasm. It carries out the reaction ATP + H2O + a folded polypeptide = ADP + phosphate + an unfolded polypeptide.. In terms of biological role, together with its co-chaperonin GroES, plays an essential role in assisting protein folding. The GroEL-GroES system forms a nano-cage that allows encapsulation of the non-native substrate proteins and provides a physical environment optimized to promote and accelerate protein folding. This is Chaperonin GroEL from Borrelia turicatae (strain 91E135).